The primary structure comprises 287 residues: Bifunctional protein FolD (287 aa).

NADP(+) is bound by residues 160 to 162, Ser189, and Thr230; that span reads GRS.

It belongs to the tetrahydrofolate dehydrogenase/cyclohydrolase family. In terms of assembly, homodimer.

It catalyses the reaction (6R)-5,10-methylene-5,6,7,8-tetrahydrofolate + NADP(+) = (6R)-5,10-methenyltetrahydrofolate + NADPH. The enzyme catalyses (6R)-5,10-methenyltetrahydrofolate + H2O = (6R)-10-formyltetrahydrofolate + H(+). It participates in one-carbon metabolism; tetrahydrofolate interconversion. Functionally, catalyzes the oxidation of 5,10-methylenetetrahydrofolate to 5,10-methenyltetrahydrofolate and then the hydrolysis of 5,10-methenyltetrahydrofolate to 10-formyltetrahydrofolate. The sequence is that of Bifunctional protein FolD from Chlamydia caviae (strain ATCC VR-813 / DSM 19441 / 03DC25 / GPIC) (Chlamydophila caviae).